Here is a 179-residue protein sequence, read N- to C-terminus: Large ribosomal subunit protein uL6 (179 aa).

This sequence belongs to the universal ribosomal protein uL6 family. In terms of assembly, part of the 50S ribosomal subunit.

In terms of biological role, this protein binds to the 23S rRNA, and is important in its secondary structure. It is located near the subunit interface in the base of the L7/L12 stalk, and near the tRNA binding site of the peptidyltransferase center. In Rhodococcus erythropolis (strain PR4 / NBRC 100887), this protein is Large ribosomal subunit protein uL6.